Here is a 33-residue protein sequence, read N- to C-terminus: Mu/omega-theraphotoxin-Tap2a (33 aa).

Intrachain disulfides connect Cys2/Cys17, Cys9/Cys22, and Cys16/Cys29.

It belongs to the neurotoxin 10 (Hwtx-1) family. 59 (Tltx) subfamily. As to expression, expressed by the venom gland.

It localises to the secreted. Gating-modifier toxin that inhibits both sodium (Nav) and calcium (Cav3) channels by inducing hyperpolarizing shift in voltage-dependence of activation and steady state inactivation. Inhibits Nav1.1/SCN1A, Nav1.2/SCN2A, Nav1.6/SCN6A, Nav1.7/SCN9A and Cav3.1/CACNA1G sodium and calcium channels at nanomolar concentrations (IC(50)=169-621 nM). Surprisingly, selectively slows fast inactivation of Nav1.3/SCN3A. Also shows moderate inhibition of Nav1.3/SCN3A sodium channels (IC(50)=1216 nM). The sequence is that of Mu/omega-theraphotoxin-Tap2a from Theraphosa apophysis (Goliath pinkfoot tarantula).